The primary structure comprises 557 residues: Eudesmanediol synthase (557 aa).

Residues Asp-310 and Asp-314 each contribute to the Mg(2+) site. Substrate contacts are provided by Asp-310, Asp-314, and Arg-450. The DDXXD motif motif lies at 310 to 314 (DDTFD). Mg(2+) is bound by residues Asn-453 and Ser-457.

The protein belongs to the terpene synthase family. Monomer. Mg(2+) serves as cofactor. Requires Mn(2+) as cofactor.

Its subcellular location is the cytoplasm. The enzyme catalyses (2E,6E)-farnesyl diphosphate + 2 H2O = 7-epi-ent-eudesmane-5,11-diol + diphosphate. It participates in secondary metabolite biosynthesis; terpenoid biosynthesis. Functionally, component of the volatile terpenes biosynthesis pathways. Dihydroxylated sesquiterpenoid synthase that generates dually hydroxylated products directly from (E,E)-farnesyl diphosphate, primarily eudesmane-2,11-diol, along with two closely related structural isomers. This Zea mays (Maize) protein is Eudesmanediol synthase.